Reading from the N-terminus, the 284-residue chain is Large ribosomal subunit protein uL2 (284 aa).

The tract at residues 232 to 284 (RGTAMNPVDHPHGGGEGRHNGYIPRTPWGKVTKGLKTRDKRKSNKWIVKDRRK) is disordered. Positions 240-250 (DHPHGGGEGRH) are enriched in basic and acidic residues. The span at 264-284 (KGLKTRDKRKSNKWIVKDRRK) shows a compositional bias: basic residues.

The protein belongs to the universal ribosomal protein uL2 family. As to quaternary structure, part of the 50S ribosomal subunit. Forms a bridge to the 30S subunit in the 70S ribosome.

In terms of biological role, one of the primary rRNA binding proteins. Required for association of the 30S and 50S subunits to form the 70S ribosome, for tRNA binding and peptide bond formation. It has been suggested to have peptidyltransferase activity; this is somewhat controversial. Makes several contacts with the 16S rRNA in the 70S ribosome. The protein is Large ribosomal subunit protein uL2 of Chlamydia felis (strain Fe/C-56) (Chlamydophila felis).